Reading from the N-terminus, the 191-residue chain is Fe/S biogenesis protein NfuA (191 aa).

Cysteine 149 and cysteine 152 together coordinate [4Fe-4S] cluster.

Belongs to the NfuA family. As to quaternary structure, homodimer. [4Fe-4S] cluster is required as a cofactor.

In terms of biological role, involved in iron-sulfur cluster biogenesis. Binds a 4Fe-4S cluster, can transfer this cluster to apoproteins, and thereby intervenes in the maturation of Fe/S proteins. Could also act as a scaffold/chaperone for damaged Fe/S proteins. The chain is Fe/S biogenesis protein NfuA from Salmonella paratyphi A (strain ATCC 9150 / SARB42).